We begin with the raw amino-acid sequence, 220 residues long: Nucleoside diphosphate kinase, mitochondrial (220 aa).

Residues 1-57 (MFSRFARAFPKILASGASQRTFATVQKAFANPTSKKLIVGSSLLIGSAFATTSFVAC) constitute a mitochondrion transit peptide. K80, F128, R156, T162, R173, and N183 together coordinate ATP. H186 serves as the catalytic Pros-phosphohistidine intermediate.

It belongs to the NDK family. Mg(2+) is required as a cofactor.

The protein localises to the mitochondrion intermembrane space. The enzyme catalyses a 2'-deoxyribonucleoside 5'-diphosphate + ATP = a 2'-deoxyribonucleoside 5'-triphosphate + ADP. The catalysed reaction is a ribonucleoside 5'-diphosphate + ATP = a ribonucleoside 5'-triphosphate + ADP. Major role in the synthesis of nucleoside triphosphates other than ATP. The ATP gamma phosphate is transferred to the NDP beta phosphate via a ping-pong mechanism, using a phosphorylated active-site intermediate. This chain is Nucleoside diphosphate kinase, mitochondrial (ndkM), found in Dictyostelium discoideum (Social amoeba).